The following is a 209-amino-acid chain: Urease accessory protein UreG (209 aa).

18–25 (GPVGSGKT) serves as a coordination point for GTP.

Belongs to the SIMIBI class G3E GTPase family. UreG subfamily. In terms of assembly, homodimer. UreD, UreF and UreG form a complex that acts as a GTP-hydrolysis-dependent molecular chaperone, activating the urease apoprotein by helping to assemble the nickel containing metallocenter of UreC. The UreE protein probably delivers the nickel.

It localises to the cytoplasm. In terms of biological role, facilitates the functional incorporation of the urease nickel metallocenter. This process requires GTP hydrolysis, probably effectuated by UreG. This chain is Urease accessory protein UreG, found in Cupriavidus pinatubonensis (strain JMP 134 / LMG 1197) (Cupriavidus necator (strain JMP 134)).